The following is an 861-amino-acid chain: Alpha-actinin A (861 aa).

Residues 1–239 (MSEEPTPVSG…VMTYVAQYYH (239 aa)) form an actin-binding region. Calponin-homology (CH) domains follow at residues 22–127 (ITQK…LRFA) and 136–242 (LSAK…HHFS). Spectrin repeat units follow at residues 240-365 (HFSA…ALEK), 366-480 (AEQE…TGVK), 481-601 (SSAE…EERK), and 602-714 (VQLA…EQVV). 2 EF-hand domains span residues 729–764 (EELSEFKACFSHFDKDNDNKLNRLEFSSCLKSIGDE) and 765–800 (LTEEQLNQVISKIDTDGNGTISFEEFIDYMVSSRKG). Residues Asp742, Asp744, Asp746, Lys748, Glu753, Asp778, Asp780, Asn782, Thr784, and Glu789 each contribute to the Ca(2+) site.

This sequence belongs to the alpha-actinin family. As to quaternary structure, homodimer; antiparallel.

It is found in the cytoplasm. Its subcellular location is the cell cortex. The protein resides in the contractile vacuole. The protein localises to the cytoplasmic vesicle. It localises to the phagosome. In terms of biological role, F-actin cross-linking protein which is thought to anchor actin to a variety of intracellular structures. This is a bundling protein. Increases the actin-stimulated ATPase activity of myosin. Involved in vegetative cell growth, phagocytosis, motility and development, probably through stabilization of the actin network in the cortical cytoskeleton. In Dictyostelium discoideum (Social amoeba), this protein is Alpha-actinin A (abpA).